A 609-amino-acid chain; its full sequence is N-acetyltransferase ESCO2 (609 aa).

Disordered stretches follow at residues 1 to 71 (MLSR…RVSP), 100 to 165 (EAKS…TDQV), 197 to 241 (KKPT…SPVR), and 314 to 357 (PDHD…LTAT). 2 stretches are compositionally biased toward polar residues: residues 13–22 (AESNPSKKQI) and 41–54 (ISLN…STPK). Residues 126–135 (PAKKVQKKPR) are compositionally biased toward basic residues. Residues 214 to 230 (PTYEKPSIRKPVREKEL) show a composition bias toward basic and acidic residues. The segment covering 345 to 355 (PLNSSTPSALT) has biased composition (polar residues). The CCHH-type zinc-finger motif lies at 392–416 (TTCASCGMLYSTDSPEDNFQHTQFH).

Belongs to the acetyltransferase family. ECO subfamily.

The protein localises to the nucleus. The protein resides in the chromosome. It carries out the reaction L-lysyl-[protein] + acetyl-CoA = N(6)-acetyl-L-lysyl-[protein] + CoA + H(+). Its function is as follows. Acetyltransferase required for the establishment of sister chromatid cohesion. Couples the processes of cohesion and DNA replication to ensure that only sister chromatids become paired together. Essential for early development. The chain is N-acetyltransferase ESCO2 (esco2) from Danio rerio (Zebrafish).